A 279-amino-acid chain; its full sequence is MFQLKNVTRQFGKKTAVSTVTFDIPQGQMVGIIGRSGAGKSTLLRMINRLVDPSSGSIEFAGLQVSSLKGAALRNWQRDCAMIFQQFNLVPRLDVLTNVLLGRLNHRSTVLSVLNMFSREERIMAIGALERLGIEQTALQPAGTLSGGQQQRVAIARALMQQPKVLLADEPIASLDPLNAKIVMDALRDINERDGITVITNLHTLDTARNYCERVIGMAHGRVVFDGQPKDLTAAAVAAIYGAETAIEESMTSTSINIPAEAPRETASAGLKPLALAGP.

The 244-residue stretch at 2 to 245 folds into the ABC transporter domain; the sequence is FQLKNVTRQF…AVAAIYGAET (244 aa). 34–41 lines the ATP pocket; it reads GRSGAGKS.

This sequence belongs to the ABC transporter superfamily. Phosphonates importer (TC 3.A.1.9.1) family. The complex is composed of two ATP-binding proteins (PhnC), two transmembrane proteins (PhnE) and a solute-binding protein (PhnD).

The protein resides in the cell inner membrane. It carries out the reaction phosphonate(out) + ATP + H2O = phosphonate(in) + ADP + phosphate + H(+). Its function is as follows. Part of the ABC transporter complex PhnCDE involved in phosphonates import. Responsible for energy coupling to the transport system. In Rhizobium meliloti (strain 1021) (Ensifer meliloti), this protein is Phosphonates import ATP-binding protein PhnC.